The following is a 74-amino-acid chain: Porwaprin-a (74 aa).

The first 24 residues, 1–24 (MSSGGLLLLLGLLTLWEVLTPVSS), serve as a signal peptide directing secretion. Residues 27-71 (RPKKLGLCPPRPQKPCVKECKNDWSCPGQQKCCNYGCIDECRDPI) form the WAP domain. Cystine bridges form between Cys34–Cys59, Cys42–Cys63, Cys46–Cys58, and Cys52–Cys67.

This sequence belongs to the venom waprin family. In terms of tissue distribution, expressed by the venom gland.

Its subcellular location is the secreted. Functionally, damages membranes of susceptible bacteria. Has no hemolytic activity. Not toxic to mice. Does not inhibit the proteinases elastase and cathepsin G. This is Porwaprin-a from Pseudechis porphyriacus (Red-bellied black snake).